The following is a 450-amino-acid chain: Ribosomal protein uS12 methylthiotransferase RimO (450 aa).

Residues 7–123 form the MTTase N-terminal domain; it reads QKVSMVSLGC…IAEILAEKSG (117 aa). Residues C16, C52, C86, C161, C165, and C168 each coordinate [4Fe-4S] cluster. Residues 147–377 form the Radical SAM core domain; sequence SSPAWFSYLK…MRIQARLSFK (231 aa). Residues 380 to 448 form the TRAM domain; that stretch reads RELIGTTEQV…DYDLIGEIQE (69 aa).

The protein belongs to the methylthiotransferase family. RimO subfamily. [4Fe-4S] cluster is required as a cofactor.

The protein localises to the cytoplasm. It catalyses the reaction L-aspartate(89)-[ribosomal protein uS12]-hydrogen + (sulfur carrier)-SH + AH2 + 2 S-adenosyl-L-methionine = 3-methylsulfanyl-L-aspartate(89)-[ribosomal protein uS12]-hydrogen + (sulfur carrier)-H + 5'-deoxyadenosine + L-methionine + A + S-adenosyl-L-homocysteine + 2 H(+). Functionally, catalyzes the methylthiolation of an aspartic acid residue of ribosomal protein uS12. The chain is Ribosomal protein uS12 methylthiotransferase RimO from Pelobacter propionicus (strain DSM 2379 / NBRC 103807 / OttBd1).